We begin with the raw amino-acid sequence, 384 residues long: S-adenosylmethionine synthase (384 aa).

Histidine 15 lines the ATP pocket. Aspartate 17 is a Mg(2+) binding site. Residue glutamate 43 coordinates K(+). 2 residues coordinate L-methionine: glutamate 56 and glutamine 99. Positions 99–109 are flexible loop; that stretch reads QSPDINQGVDK. ATP contacts are provided by residues 164-166, 230-231, aspartate 239, 245-246, alanine 262, and lysine 266; these read DAK, RF, and RK. Aspartate 239 lines the L-methionine pocket. An L-methionine-binding site is contributed by lysine 270.

It belongs to the AdoMet synthase family. In terms of assembly, homotetramer; dimer of dimers. The cofactor is Mg(2+). It depends on K(+) as a cofactor.

The protein localises to the cytoplasm. The catalysed reaction is L-methionine + ATP + H2O = S-adenosyl-L-methionine + phosphate + diphosphate. Its pathway is amino-acid biosynthesis; S-adenosyl-L-methionine biosynthesis; S-adenosyl-L-methionine from L-methionine: step 1/1. Functionally, catalyzes the formation of S-adenosylmethionine (AdoMet) from methionine and ATP. The overall synthetic reaction is composed of two sequential steps, AdoMet formation and the subsequent tripolyphosphate hydrolysis which occurs prior to release of AdoMet from the enzyme. The protein is S-adenosylmethionine synthase of Aliivibrio salmonicida (strain LFI1238) (Vibrio salmonicida (strain LFI1238)).